Here is a 387-residue protein sequence, read N- to C-terminus: Putative gustatory receptor 22d (387 aa).

The Cytoplasmic segment spans residues 1–43 (MFRPRCGLRQKFVYVILKSILYSSWLLGIFPFKYEPKKRRLRR). A helical transmembrane segment spans residues 44–64 (SMWLILFGVVISSSLLILMVK). Residues 65–82 (QSAEDREHGIMLDVFQRN) lie on the Extracellular side of the membrane. A helical membrane pass occupies residues 83–103 (ALLYQISSLMGVVGVVSICTV). Residues 104 to 142 (HLRTLWRSKHLEEIYNGLMLLEAKYFCSNAVECPAFDGY) are Cytoplasmic-facing. The helical transmembrane segment at 143-163 (VIQKGVVIVVGLLAPWMVHFG) threads the bilayer. At 164 to 184 (MPDSKLPVLNVLVVSMVKLGT) the chain is on the extracellular side. A helical membrane pass occupies residues 185-205 (LLLALHYHLGVVIIYRFVWLI). Topologically, residues 206–252 (NRELLSLVCSLRGNHKGSSSRVRFLLKLYNKLVNLYSKLADCYDCQT) are cytoplasmic. The chain crosses the membrane as a helical span at residues 253-273 (VLMMAIFLAANIIVCFYMIVY). The Extracellular segment spans residues 274–281 (RISLSKMS). A helical transmembrane segment spans residues 282-302 (FFVMLIMFPLAIANNFMDFWL). Residues 303 to 363 (SMKVCDLLQK…HCGLFHVNRE (61 aa)) are Cytoplasmic-facing. The chain crosses the membrane as a helical span at residues 364 to 384 (MGFKMFVASVLYLLYLVQFDY). The Extracellular portion of the chain corresponds to 385–387 (MNL).

The protein belongs to the insect chemoreceptor superfamily. Gustatory receptor (GR) family. Gr22e subfamily. As to expression, expressed in neurons of the dorsal pharyngeal sense organs of larvae.

It is found in the cell membrane. In terms of biological role, probable gustatory receptor which mediates acceptance or avoidance behavior, depending on its substrates. This is Putative gustatory receptor 22d from Drosophila melanogaster (Fruit fly).